Here is a 709-residue protein sequence, read N- to C-terminus: Homeobox-leucine zipper protein TF1 (709 aa).

The homeobox DNA-binding region spans 66–125 (RKRRLQRLTGKQSEVLEGFFSICGHPDDGQKRHLSETTGLGLDQVKFWFQNKRTQVKTMC). Residues 166 to 187 (NQLAVEMERLMGQSEWLQQEIA) are a coiled coil. The 230-residue stretch at 212–441 (GQHDQQMIAE…MARQSARMRD (230 aa)) folds into the START domain.

This sequence belongs to the HD-ZIP homeobox family. Class IV subfamily.

It is found in the nucleus. Probable transcription factor. This is Homeobox-leucine zipper protein TF1 (TF1) from Oryza sativa subsp. japonica (Rice).